We begin with the raw amino-acid sequence, 264 residues long: Thymidylate synthase (264 aa).

Residue arginine 21 participates in dUMP binding. Histidine 51 is a (6R)-5,10-methylene-5,6,7,8-tetrahydrofolate binding site. 126 to 127 lines the dUMP pocket; it reads RR. Cysteine 146 serves as the catalytic Nucleophile. DUMP-binding positions include 166–169, asparagine 177, and 207–209; these read RSVD and HLY. (6R)-5,10-methylene-5,6,7,8-tetrahydrofolate is bound at residue aspartate 169. Alanine 263 contributes to the (6R)-5,10-methylene-5,6,7,8-tetrahydrofolate binding site.

It belongs to the thymidylate synthase family. Bacterial-type ThyA subfamily. As to quaternary structure, homodimer.

The protein resides in the cytoplasm. The catalysed reaction is dUMP + (6R)-5,10-methylene-5,6,7,8-tetrahydrofolate = 7,8-dihydrofolate + dTMP. It functions in the pathway pyrimidine metabolism; dTTP biosynthesis. In terms of biological role, catalyzes the reductive methylation of 2'-deoxyuridine-5'-monophosphate (dUMP) to 2'-deoxythymidine-5'-monophosphate (dTMP) while utilizing 5,10-methylenetetrahydrofolate (mTHF) as the methyl donor and reductant in the reaction, yielding dihydrofolate (DHF) as a by-product. This enzymatic reaction provides an intracellular de novo source of dTMP, an essential precursor for DNA biosynthesis. This is Thymidylate synthase from Geobacillus kaustophilus (strain HTA426).